The primary structure comprises 333 residues: MLTLTRIRTVSYEVRSTFLFISVLEFAVGFLTNAFVFLVNFWDVVKRQPLSNSDCVLLCLSISRLFLHGLLFLSAIQLTHFQKLSEPLNHSYQAIIMLWMIANQANLWLAACLSLLYCSKLIRFSHTFLICLASWVSRKISQMLLGIILCSCICTVLCVWCFFSRPHFTVTTVLFMNNNTRLNWQIKDLNLFYSFLFCYLWSVPPFLLFLVSSGMLTVSLGRHMRTMKVYIRDSRDPSLEAHIKALKSLVSFFCFFVISSCAAFISVPLLILWRDKIGVMVCVGIMAACPSGHAAVLISGNAKLRRAVTTILLWAQSSLKVRADHKADSRTPC.

Over 1–17 the chain is Extracellular; that stretch reads MLTLTRIRTVSYEVRST. A helical transmembrane segment spans residues 18 to 38; the sequence is FLFISVLEFAVGFLTNAFVFL. The Cytoplasmic segment spans residues 39–55; that stretch reads VNFWDVVKRQPLSNSDC. Residues 56–76 traverse the membrane as a helical segment; it reads VLLCLSISRLFLHGLLFLSAI. Residues 77–94 are Extracellular-facing; that stretch reads QLTHFQKLSEPLNHSYQA. A helical membrane pass occupies residues 95–115; that stretch reads IIMLWMIANQANLWLAACLSL. Residues 116–142 are Cytoplasmic-facing; the sequence is LYCSKLIRFSHTFLICLASWVSRKISQ. Residues 143–163 traverse the membrane as a helical segment; sequence MLLGIILCSCICTVLCVWCFF. Over 164 to 190 the chain is Extracellular; the sequence is SRPHFTVTTVLFMNNNTRLNWQIKDLN. N178 carries an N-linked (GlcNAc...) asparagine glycan. The helical transmembrane segment at 191-211 threads the bilayer; sequence LFYSFLFCYLWSVPPFLLFLV. Residues 212 to 251 are Cytoplasmic-facing; the sequence is SSGMLTVSLGRHMRTMKVYIRDSRDPSLEAHIKALKSLVS. The chain crosses the membrane as a helical span at residues 252–272; that stretch reads FFCFFVISSCAAFISVPLLIL. The Extracellular segment spans residues 273-276; that stretch reads WRDK. The helical transmembrane segment at 277 to 297 threads the bilayer; sequence IGVMVCVGIMAACPSGHAAVL. Topologically, residues 298 to 333 are cytoplasmic; the sequence is ISGNAKLRRAVTTILLWAQSSLKVRADHKADSRTPC.

This sequence belongs to the G-protein coupled receptor T2R family.

It is found in the membrane. In terms of biological role, receptor that may play a role in the perception of bitterness and is gustducin-linked. May play a role in sensing the chemical composition of the gastrointestinal content. The activity of this receptor may stimulate alpha gustducin, mediate PLC-beta-2 activation and lead to the gating of TRPM5. The protein is Taste receptor type 2 member 38 (TAS2R38) of Gorilla gorilla gorilla (Western lowland gorilla).